We begin with the raw amino-acid sequence, 426 residues long: Histidine--tRNA ligase (426 aa).

Belongs to the class-II aminoacyl-tRNA synthetase family. In terms of assembly, homodimer.

The protein resides in the cytoplasm. It catalyses the reaction tRNA(His) + L-histidine + ATP = L-histidyl-tRNA(His) + AMP + diphosphate + H(+). The sequence is that of Histidine--tRNA ligase from Legionella pneumophila subsp. pneumophila (strain Philadelphia 1 / ATCC 33152 / DSM 7513).